Consider the following 138-residue polypeptide: Phospholipase A2 homolog 1 (138 aa).

The signal sequence occupies residues 1–16 (MRTLWIMAVLLVGVEG). Intrachain disulfides connect C42/C132, C44/C60, C59/C111, C65/C138, C66/C104, C73/C97, and C91/C102. The interval 121–134 (KKYKNNYLKPFCKK) is important for membrane-damaging activities in eukaryotes and bacteria; heparin-binding.

The protein belongs to the phospholipase A2 family. Group II subfamily. K49 sub-subfamily. As to quaternary structure, homodimer; non-covalently linked (probable alternative/compact dimer conformation in solution). In terms of tissue distribution, expressed by the venom gland.

The protein resides in the secreted. Its function is as follows. Snake venom phospholipase A2 homolog that lacks enzymatic and anticoagulant activities. In mice, it induces conspicuous local myonecrosis, edema, and a systemic interleukin-6 response. In vitro, it is cytolytic upon myoblasts, and weakly bactericidal. A model of myotoxic mechanism has been proposed: an apo Lys49-PLA2 is activated by the entrance of a hydrophobic molecule (e.g. fatty acid) at the hydrophobic channel of the protein leading to a reorientation of a monomer. This reorientation causes a transition between 'inactive' to 'active' states, causing alignment of C-terminal and membrane-docking sites (MDoS) side-by-side and putting the membrane-disruption sites (MDiS) in the same plane, exposed to solvent and in a symmetric position for both monomers. The MDoS region stabilizes the toxin on membrane by the interaction of charged residues with phospholipid head groups. Subsequently, the MDiS region destabilizes the membrane with penetration of hydrophobic residues. This insertion causes a disorganization of the membrane, allowing an uncontrolled influx of ions (i.e. calcium and sodium), and eventually triggering irreversible intracellular alterations and cell death. This is Phospholipase A2 homolog 1 from Bothrops atrox (Barba amarilla).